The chain runs to 559 residues: Potassium-transporting ATPase potassium-binding subunit (559 aa).

Transmembrane regions (helical) follow at residues 5-25 (GFLLIASFLLILLVLAKPLGS), 27-47 (LARLIAAVPLPGVAGIERILW), 63-83 (LLALLTLNLLGLGILFCLLFW), 132-152 (GLTVQNFLSAATGIAVVFALI), 170-190 (LVRITLWILFPVALIIALFFI), 253-273 (LAQMLAIFLIPAALCFAFGEA), 283-303 (LLWAMSFIFVVCVAVVMWAEV), 327-347 (FGVLASSLFAVVTTAASCGAV), 356-376 (ALGGMVPMWLMQIGEVVFGGV), 379-399 (GLYGMLLFVLLAVFIAGLMIG), 416-436 (MTALAILVTPMLVLLGSALAM), 484-504 (LLAFCMFVGRFGVIIPVMAIA), and 524-544 (GALFIGLLIGTVLLVGALTFI).

The protein belongs to the KdpA family. As to quaternary structure, the system is composed of three essential subunits: KdpA, KdpB and KdpC.

The protein localises to the cell inner membrane. In terms of biological role, part of the high-affinity ATP-driven potassium transport (or Kdp) system, which catalyzes the hydrolysis of ATP coupled with the electrogenic transport of potassium into the cytoplasm. This subunit binds the periplasmic potassium ions and delivers the ions to the membrane domain of KdpB through an intramembrane tunnel. This is Potassium-transporting ATPase potassium-binding subunit from Salmonella typhimurium (strain LT2 / SGSC1412 / ATCC 700720).